A 155-amino-acid polypeptide reads, in one-letter code: MAAGSITTLPTESEDGGNTPFSPGSFKDPKRLYCKNGGFFLRINSDGRVDGSRDKSDSHIKLQLQAVERGVVSIKGITANRYLAMKEDGRLTSLRCITDECFFFERLEANNYNTYRSRKYSSWYVALKRTGQYKNGSSTGPGQKAILFLPMSAKS.

The propeptide occupies 1 to 9 (MAAGSITTL). A compositionally biased stretch (polar residues) spans 1–11 (MAAGSITTLPT). The interval 1-24 (MAAGSITTLPTESEDGGNTPFSPG) is disordered. Heparin-binding positions include 27 to 31 (KDPKR) and 116 to 119 (RSRK).

The protein belongs to the heparin-binding growth factors family.

It is found in the secreted. The protein localises to the nucleus. Its function is as follows. Acts as a ligand for FGFR1, FGFR2, FGFR3 and FGFR4. Also acts as an integrin ligand which is required for FGF2 signaling. Plays an important role in the regulation of cell survival, cell division, cell differentiation and cell migration. Functions as a potent mitogen in vitro. Can induce angiogenesis. The chain is Fibroblast growth factor 2 (fgf2) from Xenopus laevis (African clawed frog).